The following is a 278-amino-acid chain: ATP synthase subunit a (278 aa).

The next 6 membrane-spanning stretches (helical) occupy residues 41–61 (FLNI…LLFF), 108–128 (LTIF…VDFV), 149–168 (INIT…YFGI), 180–200 (FFFQ…LELI), 222–242 (LIFI…LSVP), and 244–264 (AIFH…LTII).

This sequence belongs to the ATPase A chain family. As to quaternary structure, F-type ATPases have 2 components, CF(1) - the catalytic core - and CF(0) - the membrane proton channel. CF(1) has five subunits: alpha(3), beta(3), gamma(1), delta(1), epsilon(1). CF(0) has three main subunits: a(1), b(2) and c(9-12). The alpha and beta chains form an alternating ring which encloses part of the gamma chain. CF(1) is attached to CF(0) by a central stalk formed by the gamma and epsilon chains, while a peripheral stalk is formed by the delta and b chains.

It is found in the cell membrane. Its function is as follows. Key component of the proton channel; it plays a direct role in the translocation of protons across the membrane. This Wigglesworthia glossinidia brevipalpis protein is ATP synthase subunit a.